The chain runs to 722 residues: Zinc finger BED domain-containing protein RICESLEEPER 1 (722 aa).

A BED-type zinc finger spans residues 66-126 (RKKSLVWEHF…GSCPKIKNQE (61 aa)). 4 residues coordinate Zn(2+): Cys-89, Cys-92, His-113, and Cys-119. Residues 572–592 (VEQGGGNNAPASENSTQATAP) form a disordered region. Over residues 580–592 (APASENSTQATAP) the composition is skewed to polar residues. An HATC (Hobo-Ac-Tam3) domain region spans residues 617–702 (ELEQYLDESL…EALVCAKDWL (86 aa)).

In terms of assembly, homodimer.

It is found in the nucleus. Functionally, transposase-like protein that is essential for plant growth and development. May regulate global gene expression by recruiting other cellular factors. This chain is Zinc finger BED domain-containing protein RICESLEEPER 1, found in Oryza sativa subsp. japonica (Rice).